The following is a 239-amino-acid chain: Urease accessory protein UreE (239 aa).

The disordered stretch occupies residues 185–239 (VASPLDEPHGSGLHIHGIHSHGDGHSHSHDSHSHSHDSDHGHSHSHGDHDHDHKH). Basic and acidic residues predominate over residues 204–239 (SHGDGHSHSHDSHSHSHDSDHGHSHSHGDHDHDHKH).

It belongs to the UreE family.

The protein resides in the cytoplasm. Involved in urease metallocenter assembly. Binds nickel. Probably functions as a nickel donor during metallocenter assembly. This chain is Urease accessory protein UreE, found in Yersinia frederiksenii.